The sequence spans 306 residues: Recombination-associated protein RdgC (306 aa).

Belongs to the RdgC family.

The protein localises to the cytoplasm. It localises to the nucleoid. In terms of biological role, may be involved in recombination. The sequence is that of Recombination-associated protein RdgC from Pseudomonas aeruginosa (strain ATCC 15692 / DSM 22644 / CIP 104116 / JCM 14847 / LMG 12228 / 1C / PRS 101 / PAO1).